Reading from the N-terminus, the 219-residue chain is UPF0502 protein Gura_3445 (219 aa).

The segment at 162–181 is disordered; that stretch reads AGEPDLPDDTPAPPPEPARQ.

Belongs to the UPF0502 family.

This chain is UPF0502 protein Gura_3445, found in Geotalea uraniireducens (strain Rf4) (Geobacter uraniireducens).